The chain runs to 366 residues: Chorismate synthase (366 aa).

NADP(+)-binding residues include Arg-48 and Arg-54. FMN-binding positions include 125–127, 238–239, Gly-278, 293–297, and Arg-319; these read RSS, NA, and KPTSS.

It belongs to the chorismate synthase family. Homotetramer. The cofactor is FMNH2.

The catalysed reaction is 5-O-(1-carboxyvinyl)-3-phosphoshikimate = chorismate + phosphate. It functions in the pathway metabolic intermediate biosynthesis; chorismate biosynthesis; chorismate from D-erythrose 4-phosphate and phosphoenolpyruvate: step 7/7. Its function is as follows. Catalyzes the anti-1,4-elimination of the C-3 phosphate and the C-6 proR hydrogen from 5-enolpyruvylshikimate-3-phosphate (EPSP) to yield chorismate, which is the branch point compound that serves as the starting substrate for the three terminal pathways of aromatic amino acid biosynthesis. This reaction introduces a second double bond into the aromatic ring system. In Neisseria meningitidis serogroup B (strain ATCC BAA-335 / MC58), this protein is Chorismate synthase.